We begin with the raw amino-acid sequence, 2185 residues long: Genome polyprotein (2185 aa).

Gly-2 is lipidated: N-myristoyl glycine; by host. At 2-1495 (GAQVSTQKTG…HVNRAFICLQ (1494 aa)) the chain is on the cytoplasmic side. The tract at residues 566–582 (FFQGPPGEVVERAIARV) is amphipathic alpha-helix. Catalysis depends on for protease 2A activity residues His-872 and Asp-890. Zn(2+) is bound by residues Cys-907 and Cys-909. Residue Cys-961 is the For protease 2A activity of the active site. 2 residues coordinate Zn(2+): Cys-967 and His-969. The tract at residues 1101-1173 (NSGWLKKFTE…EQSAPSQSDQ (73 aa)) is membrane-binding. Residues 1101 to 1239 (NSGWLKKFTE…SPGAGKSVAT (139 aa)) are oligomerization. The segment at 1122 to 1126 (AIKIQ) is RNA-binding. One can recognise an SF3 helicase domain in the interval 1205 to 1361 (EKKMSNYIQF…SMYSQNGKIN (157 aa)). Cys-1369, Cys-1381, and Cys-1386 together coordinate Zn(2+). A C4-type; degenerate zinc finger spans residues 1369–1386 (CDEECCPVNFKKCCPLVC). The segment at 1413-1420 (EYNHRHSV) is RNA-binding. The interval 1424 to 1429 (LEALFQ) is oligomerization. Residues 1496–1511 (ALTTFVSVAGIIYIIY) lie within the membrane without spanning it. At 1512 to 2185 (KLFAGFQGAY…TLRRKWLDSF (674 aa)) the chain is on the cytoplasmic side. An O-(5'-phospho-RNA)-tyrosine modification is found at Tyr-1521. Positions 1541–1719 (GPAFEFAVAM…FSAALLRHYF (179 aa)) constitute a Peptidase C3 domain. Residues His-1580, Glu-1611, and Cys-1687 each act as for protease 3C activity in the active site. The region spanning 1950–2066 (GHLIAFDYSG…SYPWPIDASL (117 aa)) is the RdRp catalytic domain. Mg(2+) contacts are provided by Asp-1956 and Asp-2052.

This sequence belongs to the picornaviruses polyprotein family. Interacts with capsid protein VP1 and capsid protein VP3 to form heterotrimeric protomers. As to quaternary structure, interacts with capsid protein VP0, and capsid protein VP3 to form heterotrimeric protomers. Five protomers subsequently associate to form pentamers which serve as building blocks for the capsid. Interacts with capsid protein VP2, capsid protein VP3 and capsid protein VP4 following cleavage of capsid protein VP0. In terms of assembly, interacts with capsid protein VP1 and capsid protein VP3 in the mature capsid. Interacts with capsid protein VP0 and capsid protein VP1 to form heterotrimeric protomers. Five protomers subsequently associate to form pentamers which serve as building blocks for the capsid. Interacts with capsid protein VP4 in the mature capsid. Interacts with protein 2C; this interaction may be important for virion morphogenesis. As to quaternary structure, interacts with capsid protein VP1 and capsid protein VP3. In terms of assembly, homodimer. Homohexamer; forms a hexameric ring structure with 6-fold symmetry characteristic of AAA+ ATPases. Interacts (via N-terminus) with host RTN3 (via reticulon domain); this interaction is important for viral replication. Interacts with capsid protein VP3; this interaction may be important for virion morphogenesis. As to quaternary structure, interacts with protein 3CD. In terms of assembly, homodimer. Interacts with host GBF1. Interacts (via GOLD domain) with host ACBD3 (via GOLD domain); this interaction allows the formation of a viral protein 3A/ACBD3 heterotetramer with a 2:2 stoichiometry, which will stimulate the recruitment of host PI4KB in order to synthesize PI4P at the viral RNA replication sites. Interacts with RNA-directed RNA polymerase. As to quaternary structure, interacts with protein 3AB and with RNA-directed RNA polymerase. In terms of assembly, interacts with Viral protein genome-linked and with protein 3CD. Mg(2+) is required as a cofactor. Specific enzymatic cleavages in vivo by the viral proteases yield processing intermediates and the mature proteins. In terms of processing, myristoylation is required for the formation of pentamers during virus assembly. Further assembly of 12 pentamers and a molecule of genomic RNA generates the provirion. Post-translationally, during virion maturation, immature virions are rendered infectious following cleavage of VP0 into VP4 and VP2. This maturation seems to be an autocatalytic event triggered by the presence of RNA in the capsid and it is followed by a conformational change infectious virion. Myristoylation is required during RNA encapsidation and formation of the mature virus particle. In terms of processing, VPg is uridylylated by the polymerase into VPg-pUpU. This acts as a nucleotide-peptide primer for the genomic RNA replication.

It is found in the virion. The protein localises to the host cytoplasm. It localises to the host cytoplasmic vesicle membrane. Its subcellular location is the host nucleus. The enzyme catalyses a ribonucleoside 5'-triphosphate + H2O = a ribonucleoside 5'-diphosphate + phosphate + H(+). It carries out the reaction Selective cleavage of Tyr-|-Gly bond in the picornavirus polyprotein.. The catalysed reaction is RNA(n) + a ribonucleoside 5'-triphosphate = RNA(n+1) + diphosphate. It catalyses the reaction Selective cleavage of Gln-|-Gly bond in the poliovirus polyprotein. In other picornavirus reactions Glu may be substituted for Gln, and Ser or Thr for Gly.. Its activity is regulated as follows. Replication or transcription is subject to high level of random mutations by the nucleotide analog ribavirin. Its function is as follows. Forms an icosahedral capsid of pseudo T=3 symmetry with capsid proteins VP2 and VP3. The capsid is 300 Angstroms in diameter, composed of 60 copies of each capsid protein and enclosing the viral positive strand RNA genome. Capsid protein VP1 mainly forms the vertices of the capsid. Capsid protein VP1 interacts with host cell receptor to provide virion attachment to target host cells. This attachment induces virion internalization. Tyrosine kinases are probably involved in the entry process. After binding to its receptor, the capsid undergoes conformational changes. Capsid protein VP1 N-terminus (that contains an amphipathic alpha-helix) and capsid protein VP4 are externalized. Together, they shape a pore in the host membrane through which viral genome is translocated to host cell cytoplasm. In terms of biological role, forms an icosahedral capsid of pseudo T=3 symmetry with capsid proteins VP2 and VP3. The capsid is 300 Angstroms in diameter, composed of 60 copies of each capsid protein and enclosing the viral positive strand RNA genome. Functionally, lies on the inner surface of the capsid shell. After binding to the host receptor, the capsid undergoes conformational changes. Capsid protein VP4 is released, Capsid protein VP1 N-terminus is externalized, and together, they shape a pore in the host membrane through which the viral genome is translocated into the host cell cytoplasm. Component of immature procapsids, which is cleaved into capsid proteins VP4 and VP2 after maturation. Allows the capsid to remain inactive before the maturation step. Its function is as follows. Cysteine protease that cleaves viral polyprotein and specific host proteins. It is responsible for the autocatalytic cleavage between the P1 and P2 regions, which is the first cleavage occurring in the polyprotein. Also cleaves the host translation initiation factor EIF4G1, in order to shut down the capped cellular mRNA translation. Inhibits the host nucleus-cytoplasm protein and RNA trafficking by cleaving host members of the nuclear pores. Counteracts stress granule formation probably by antagonizing its assembly or promoting its dissassembly. In terms of biological role, plays an essential role in the virus replication cycle by acting as a viroporin. Creates a pore in the host endoplasmic reticulum and as a consequence releases Ca2+ in the cytoplasm of infected cell. In turn, high levels of cytoplasmic calcium may trigger membrane trafficking and transport of viral ER-associated proteins to viroplasms, sites of viral genome replication. Functionally, induces and associates with structural rearrangements of intracellular membranes. Displays RNA-binding, nucleotide binding and NTPase activities. May play a role in virion morphogenesis and viral RNA encapsidation by interacting with the capsid protein VP3. Localizes the viral replication complex to the surface of membranous vesicles. Together with protein 3CD binds the Cis-Active RNA Element (CRE) which is involved in RNA synthesis initiation. Acts as a cofactor to stimulate the activity of 3D polymerase, maybe through a nucleid acid chaperone activity. Its function is as follows. Localizes the viral replication complex to the surface of membranous vesicles. It inhibits host cell endoplasmic reticulum-to-Golgi apparatus transport and causes the disassembly of the Golgi complex, possibly through GBF1 interaction. This would result in depletion of MHC, trail receptors and IFN receptors at the host cell surface. Plays an essential role in viral RNA replication by recruiting ACBD3 and PI4KB at the viral replication sites, thereby allowing the formation of the rearranged membranous structures where viral replication takes place. In terms of biological role, acts as a primer for viral RNA replication and remains covalently bound to viral genomic RNA. VPg is uridylylated prior to priming replication into VPg-pUpU. The oriI viral genomic sequence may act as a template for this. The VPg-pUpU is then used as primer on the genomic RNA poly(A) by the RNA-dependent RNA polymerase to replicate the viral genome. During genome replication, the VPg-RNA linkage is removed by the host TDP2, thereby accelerating replication. During the late stage of the replication cycle, host TDP2 is excluded from sites of viral RNA synthesis and encapsidation, allowing for the generation of progeny virions. Functionally, involved in the viral replication complex and viral polypeptide maturation. It exhibits protease activity with a specificity and catalytic efficiency that is different from protease 3C. Protein 3CD lacks polymerase activity. Protein 3CD binds to the 5'UTR of the viral genome. Major viral protease that mediates proteolytic processing of the polyprotein. Cleaves host EIF5B, contributing to host translation shutoff. Also cleaves host PABPC1, contributing to host translation shutoff. Cleaves host NLRP1, triggers host N-glycine-mediated degradation of the autoinhibitory NLRP1 N-terminal fragment. Its function is as follows. Replicates the viral genomic RNA on the surface of intracellular membranes. May form linear arrays of subunits that propagate along a strong head-to-tail interaction called interface-I. Covalently attaches UMP to a tyrosine of VPg, which is used to prime RNA synthesis. The positive stranded RNA genome is first replicated at virus induced membranous vesicles, creating a dsRNA genomic replication form. This dsRNA is then used as template to synthesize positive stranded RNA genomes. ss(+)RNA genomes are either translated, replicated or encapsidated. The polypeptide is Genome polyprotein (Swine vesicular disease virus (strain H/3 '76) (SVDV)).